The chain runs to 296 residues: MYKIVSKKELTNNIFSMDIEAPRVAKSAKPGQFIIIKNDEKGERIPLTIADYDQEKGTVTIVFQTVGKGTKQLAAFNEGDHVADFVGPLGVPSEFIHEDIEELKKKNFIFVAGGVGAAPVYPQVKWMHEHGIAVDVILGSRNKDLLIYEEKLNKAAGNLYVTTDDGSYEFKGTGSDMLKELVNNQGKKYDHAIIIGPMIMMKFTSMLTKELGIPTTVSLNPIMVDGTGMCGACRVTVGGEVKFACVDGPEFDGHLVNYDESMRRQAMYKTEEGKAQLEVEEGNTHSHGGCGCRGDK.

Positions 1–95 (MYKIVSKKEL…VGPLGVPSEF (95 aa)) constitute an FAD-binding FR-type domain.

This is an uncharacterized protein from Clostridium beijerinckii (Clostridium MP).